Here is a 394-residue protein sequence, read N- to C-terminus: Dihydroorotase (394 aa).

The Zn(2+) site is built by His-15, His-17, Lys-98, His-135, His-175, and Asp-245. Residue Lys-98 is modified to N6-carboxylysine.

The protein belongs to the metallo-dependent hydrolases superfamily. DHOase family. Class II DHOase subfamily. Zn(2+) is required as a cofactor.

The enzyme catalyses (S)-dihydroorotate + H2O = N-carbamoyl-L-aspartate + H(+). It functions in the pathway pyrimidine metabolism; UMP biosynthesis via de novo pathway; (S)-dihydroorotate from bicarbonate: step 3/3. This is Dihydroorotase (PYR3) from Mycosarcoma maydis (Corn smut fungus).